The sequence spans 459 residues: Anthocyanidin 3-O-glucoside 2''-O-glucosyltransferase (459 aa).

His-20 serves as the catalytic Proton acceptor. His-20 is an an anthocyanidin binding site. Catalysis depends on Asp-117, which acts as the Charge relay. UDP-alpha-D-glucose contacts are provided by Thr-138, Val-335, Gln-337, His-352, Trp-355, Ser-357, and Glu-360. Gly-375 serves as a coordination point for an anthocyanidin. 2 residues coordinate UDP-alpha-D-glucose: Asp-376 and Gln-377.

It belongs to the UDP-glycosyltransferase family. Mainly expressed in the petals and tubes of flower buds at around 24 hours before flower opening.

The catalysed reaction is an anthocyanidin 3-O-beta-D-glucoside + UDP-alpha-D-glucose = an anthocyanidin 3-O-sophoroside + UDP + 2 H(+). The protein operates within pigment biosynthesis; anthocyanin biosynthesis. Its function is as follows. Glycosyltransferase that mediates the glucosylation of anthocyanidin 3-O-glucosides to yield anthocyanidin 3-O-sophorosides. 3-O-sophoroside derivatives are required for the bright blue or red color of flowers. This chain is Anthocyanidin 3-O-glucoside 2''-O-glucosyltransferase (3GGT), found in Ipomoea nil (Japanese morning glory).